The chain runs to 265 residues: UPF0246 protein NT01EI_0662 (265 aa).

The protein belongs to the UPF0246 family.

This is UPF0246 protein NT01EI_0662 from Edwardsiella ictaluri (strain 93-146).